Here is a 494-residue protein sequence, read N- to C-terminus: Alpha-amylase-related protein (494 aa).

The N-terminal stretch at 1-20 is a signal peptide; that stretch reads MIKFALALTLCLAGASLSLA. Glutamine 21 bears the Pyrrolidone carboxylic acid mark. Cysteine 48 and cysteine 104 form a disulfide bridge. 3 residues coordinate Ca(2+): asparagine 118, glutamine 169, and aspartate 178. Residues cysteine 157 and cysteine 171 are joined by a disulfide bond. A chloride-binding site is contributed by arginine 206. The Nucleophile role is filled by aspartate 208. Histidine 212 contacts Ca(2+). Glutamate 245 serves as the catalytic Proton donor. 2 residues coordinate chloride: asparagine 308 and arginine 343. 3 cysteine pairs are disulfide-bonded: cysteine 376-cysteine 382, cysteine 418-cysteine 441, and cysteine 448-cysteine 460.

Belongs to the glycosyl hydrolase 13 family. As to quaternary structure, monomer. Requires Ca(2+) as cofactor. The cofactor is chloride.

The protein resides in the secreted. It carries out the reaction Endohydrolysis of (1-&gt;4)-alpha-D-glucosidic linkages in polysaccharides containing three or more (1-&gt;4)-alpha-linked D-glucose units.. This Drosophila auraria (Fruit fly) protein is Alpha-amylase-related protein (Amyrel).